Here is a 496-residue protein sequence, read N- to C-terminus: Probable cytosol aminopeptidase (496 aa).

Lysine 258 and aspartate 263 together coordinate Mn(2+). Lysine 270 is an active-site residue. Mn(2+) is bound by residues aspartate 281, aspartate 340, and glutamate 342. Arginine 344 is a catalytic residue.

This sequence belongs to the peptidase M17 family. Mn(2+) serves as cofactor.

The protein resides in the cytoplasm. It catalyses the reaction Release of an N-terminal amino acid, Xaa-|-Yaa-, in which Xaa is preferably Leu, but may be other amino acids including Pro although not Arg or Lys, and Yaa may be Pro. Amino acid amides and methyl esters are also readily hydrolyzed, but rates on arylamides are exceedingly low.. It carries out the reaction Release of an N-terminal amino acid, preferentially leucine, but not glutamic or aspartic acids.. Its function is as follows. Presumably involved in the processing and regular turnover of intracellular proteins. Catalyzes the removal of unsubstituted N-terminal amino acids from various peptides. This is Probable cytosol aminopeptidase from Helicobacter pylori (strain P12).